Consider the following 176-residue polypeptide: Phosphopantetheine adenylyltransferase (176 aa).

Ser-8 contributes to the substrate binding site. ATP is bound by residues 8–9 (SF) and His-16. Residues Lys-40, Thr-72, and Arg-86 each coordinate substrate. Residues 87-89 (GLR), Glu-97, and 122-128 (YSFLSSS) contribute to the ATP site.

The protein belongs to the bacterial CoaD family. In terms of assembly, homohexamer. Mg(2+) is required as a cofactor.

The protein resides in the cytoplasm. The enzyme catalyses (R)-4'-phosphopantetheine + ATP + H(+) = 3'-dephospho-CoA + diphosphate. It participates in cofactor biosynthesis; coenzyme A biosynthesis; CoA from (R)-pantothenate: step 4/5. Functionally, reversibly transfers an adenylyl group from ATP to 4'-phosphopantetheine, yielding dephospho-CoA (dPCoA) and pyrophosphate. This is Phosphopantetheine adenylyltransferase from Acaryochloris marina (strain MBIC 11017).